The chain runs to 146 residues: 1,4-dihydroxy-2-naphthoyl-CoA hydrolase (146 aa).

The active site involves Asp19.

Belongs to the 4-hydroxybenzoyl-CoA thioesterase family. DHNA-CoA hydrolase subfamily.

It carries out the reaction 1,4-dihydroxy-2-naphthoyl-CoA + H2O = 1,4-dihydroxy-2-naphthoate + CoA + H(+). The protein operates within cofactor biosynthesis; phylloquinone biosynthesis. It functions in the pathway quinol/quinone metabolism; 1,4-dihydroxy-2-naphthoate biosynthesis; 1,4-dihydroxy-2-naphthoate from chorismate: step 7/7. In terms of biological role, catalyzes the hydrolysis of 1,4-dihydroxy-2-naphthoyl-CoA (DHNA-CoA) to 1,4-dihydroxy-2-naphthoate (DHNA), a reaction involved in phylloquinone (vitamin K1) biosynthesis. The chain is 1,4-dihydroxy-2-naphthoyl-CoA hydrolase from Thermosynechococcus vestitus (strain NIES-2133 / IAM M-273 / BP-1).